A 187-amino-acid polypeptide reads, in one-letter code: Protein GrpE (187 aa).

Residues 1–38 (MSEEKQTVEQNETEEQEIIEEQAAADEQQEETNESELL) are disordered. A compositionally biased stretch (acidic residues) spans 11–34 (NETEEQEIIEEQAAADEQQEETNE).

It belongs to the GrpE family. In terms of assembly, homodimer.

The protein localises to the cytoplasm. Functionally, participates actively in the response to hyperosmotic and heat shock by preventing the aggregation of stress-denatured proteins, in association with DnaK and GrpE. It is the nucleotide exchange factor for DnaK and may function as a thermosensor. Unfolded proteins bind initially to DnaJ; upon interaction with the DnaJ-bound protein, DnaK hydrolyzes its bound ATP, resulting in the formation of a stable complex. GrpE releases ADP from DnaK; ATP binding to DnaK triggers the release of the substrate protein, thus completing the reaction cycle. Several rounds of ATP-dependent interactions between DnaJ, DnaK and GrpE are required for fully efficient folding. This Bacillus subtilis (strain 168) protein is Protein GrpE.